We begin with the raw amino-acid sequence, 370 residues long: Ribosomal RNA small subunit methyltransferase H (370 aa).

S-adenosyl-L-methionine contacts are provided by residues 85 to 87, Asp104, Tyr131, Asp152, and Gln159; that span reads GGH. 2 stretches are compositionally biased toward basic and acidic residues: residues 332 to 345 and 353 to 370; these read GAERATPEEIERNP and RALEKVAGRPTTARRDAR. Residues 332–370 are disordered; that stretch reads GAERATPEEIERNPRSAPVRLRALEKVAGRPTTARRDAR.

The protein belongs to the methyltransferase superfamily. RsmH family.

It is found in the cytoplasm. It carries out the reaction cytidine(1402) in 16S rRNA + S-adenosyl-L-methionine = N(4)-methylcytidine(1402) in 16S rRNA + S-adenosyl-L-homocysteine + H(+). In terms of biological role, specifically methylates the N4 position of cytidine in position 1402 (C1402) of 16S rRNA. The polypeptide is Ribosomal RNA small subunit methyltransferase H (Mycobacterium sp. (strain KMS)).